Consider the following 505-residue polypeptide: MGRTRKANVCPRLSRRALGFYTRDAGVVQRTNLGILRALVCQESTKFKNVWTTHSKSPIAYERGRIYFDNYRCCVSSVASEPRKLYEMPKCSKSEKIEDALLWECPVGEILPDPSDYKSSLIALTAHNWLLRISATTGEILEKIYLASYCKFRYLSWDTPQEVIAVKSAQNKGSAAARQAGTQPPVLLYLAVFRVLPFSLVGILEINRKVFENVTDATLSHGILIVMYSSGLVRLYSFQAIIEQFMQQKLDLGCACSQGGTTGTVGEAPFGIPCNVKITDSPPPLFEVSSLENAFQIGGHPWHYIITPNKKKQKGVFHICALKDNSLAKNGIQEMECCSLESDWIYFHPDASGRIIHVGPNQVKVLKLSEVENNSSQHQISEDFVIWANREDRKENLITVTASGRVVKRNVNLLDDDPEQETFKVVDYEDELNLLSVVAVTQIDAEGKAHLDFHCNEYGTLLKSIPLVESWDVVCITTGTLSCKGFLYKRHLLGHVLVSPDSPVP.

The next 2 membrane-spanning stretches (helical) occupy residues 186–206 (VLLY…ILEI) and 222–242 (GILI…QAII).

Interacts with DDB1, CUL4A and CUL4B.

It is found in the membrane. The protein localises to the nucleus. The protein resides in the nucleolus. Its pathway is protein modification; protein ubiquitination. Its function is as follows. May function as a substrate receptor for CUL4-DDB1 E3 ubiquitin-protein ligase complex. The polypeptide is DDB1- and CUL4-associated factor 17 (Dcaf17) (Rattus norvegicus (Rat)).